An 87-amino-acid chain; its full sequence is Small ribosomal subunit protein bS18 (87 aa).

It belongs to the bacterial ribosomal protein bS18 family. Part of the 30S ribosomal subunit. Forms a tight heterodimer with protein bS6.

Functionally, binds as a heterodimer with protein bS6 to the central domain of the 16S rRNA, where it helps stabilize the platform of the 30S subunit. This is Small ribosomal subunit protein bS18 from Nitratidesulfovibrio vulgaris (strain DSM 19637 / Miyazaki F) (Desulfovibrio vulgaris).